Reading from the N-terminus, the 415-residue chain is Metal tolerance protein 5 (415 aa).

At 1–124 the chain is on the cytoplasmic side; sequence MAAAVAGGGE…REKVARSETL (124 aa). Residues 125–145 traverse the membrane as a helical segment; the sequence is AIRLSNIANMVLFAAKVYASV. At 146 to 150 the chain is on the vacuolar side; it reads RSGSL. Residues 151-171 traverse the membrane as a helical segment; the sequence is AIIASTLDSLLDLLSGFILWF. The Cytoplasmic portion of the chain corresponds to 172–192; that stretch reads TAFSMQTPNPYRYPIGKKRMQ. Residues 193 to 213 form a helical membrane-spanning segment; it reads PLGILVFASVMATLGLQIILE. Topologically, residues 214–232 are vacuolar; the sequence is SVRSLLSDGDEFSLTKEQE. A helical transmembrane segment spans residues 233 to 253; that stretch reads KWVVDIMLAVTLVKLALVLYC. Residues 254 to 268 lie on the Cytoplasmic side of the membrane; sequence RTFTNEIVKAYAQDH. The helical transmembrane segment at 269–291 threads the bilayer; sequence FFDVITNMIGLVAALLATYIEGW. Topologically, residues 292–293 are vacuolar; that stretch reads ID. Residues 294 to 313 form a helical membrane-spanning segment; sequence PVGAIILAIYTIRTWSMTVL. The Cytoplasmic portion of the chain corresponds to 314-415; it reads ENVHSLVGQS…RPEHALSHEK (102 aa).

Belongs to the cation diffusion facilitator (CDF) transporter (TC 2.A.4) family. SLC30A subfamily.

It localises to the vacuole membrane. Its function is as follows. Involved in sequestration of excess metal in the cytoplasm into vacuoles to maintain metal homeostasis. The sequence is that of Metal tolerance protein 5 (MTP5) from Oryza sativa subsp. japonica (Rice).